The chain runs to 438 residues: Battenin (438 aa).

Residues 1-25 (MGGCAGSRRRLSDSEGEETVPEPRL) are disordered. At 1–37 (MGGCAGSRRRLSDSEGEETVPEPRLPLLDHQGAHWKN) the chain is on the cytoplasmic side. A phosphoserine mark is found at Ser-12 and Ser-14. The helical transmembrane segment at 38-58 (AVGFWLLGLCNNFSYVVMLSA) threads the bilayer. Residues 59–127 (AHDILSHERT…GLHLLPYSPR (69 aa)) lie on the Lumenal side of the membrane. Residues Asn-71 and Asn-85 are each glycosylated (N-linked (GlcNAc...) asparagine). Residues 128-148 (VLVSGICAAGSFVLVAFSHSV) traverse the membrane as a helical segment. Topologically, residues 149-151 (GTS) are cytoplasmic. A helical transmembrane segment spans residues 152 to 172 (LCGVVLASISSGLGEVTFLSL). Residues 173–182 (TAFYPRAVIS) are Lumenal-facing. A helical membrane pass occupies residues 183–203 (WWSSGTGGAGLLGALSYLGLT). At 204–277 (QAGLSPQQTL…SLSLRERWTV (74 aa)) the chain is on the cytoplasmic side. The disordered stretch occupies residues 237 to 268 (QDPGGEEEAESSARQPLIRTEAPESKPGSSSS). The Lysosomal targeting motif motif lies at 242 to 244 (EEE). Positions 253 to 254 (LI) match the Lysosomal targeting motif. Required for AP1G1, AP2A2 and AP3D1 interaction motif. The helical transmembrane segment at 278-298 (FKGLLWYIVPLVVVYFAEYFI) threads the bilayer. Over 299 to 346 (NQGLFELLFFRNTSLSHAQQYRWYQMLYQAGVFASRSSLRCCHIRFTW) the chain is Lumenal. N-linked (GlcNAc...) asparagine glycosylation occurs at Asn-310. A helical membrane pass occupies residues 347–367 (ALALLQCLNLAFLLADVWFGF). Over 368-438 (LLSIYFVFLI…PLHDFLCQLS (71 aa)) the chain is Cytoplasmic. Residues 409 to 419 (MATTCISDTLG) carry the Lysosomal targeting motif motif. Position 435 is a cysteine methyl ester (Cys-435). Cys-435 carries S-farnesyl cysteine lipidation. A propeptide spans 436 to 438 (QLS) (removed in mature form).

The protein belongs to the battenin family. Interacts with DCTN1, KIF3A, RAB7A and RILP. Interacts with CLN5. In terms of processing, highly glycosylated. Farnesylation is important for trafficking to lysosomes.

It localises to the lysosome membrane. The protein localises to the late endosome. The protein resides in the lysosome. In terms of biological role, mediates microtubule-dependent, anterograde transport connecting the Golgi network, endosomes, autophagosomes, lysosomes and plasma membrane, and participates in several cellular processes such as regulation of lysosomal pH, lysosome protein degradation, receptor-mediated endocytosis, autophagy, transport of proteins and lipids from the TGN, apoptosis and synaptic transmission. Facilitates the proteins transport from trans-Golgi network (TGN)-to other membrane compartments such as transport of microdomain-associated proteins to the plasma membrane, IGF2R transport to the lysosome where it regulates the CTSD release leading to regulation of CTSD maturation and thereby APP intracellular processing. Moreover regulates CTSD activity in response to osmotic stress. Also binds galactosylceramide and transports it from the trans Golgi to the rafts, which may have immediate and downstream effects on cell survival by modulating ceramide synthesis. At the plasma membrane, regulates actin-dependent events including filopodia formation, cell migration, and pinocytosis through ARF1-CDC42 pathway and also the cytoskeleton organization through interaction with MYH10 and fodrin leading to the regulation of the plasma membrane association of Na+, K+ ATPase complex. Regulates synaptic transmission in the amygdala, hippocampus, and cerebellum through regulation of synaptic vesicles density and their proximity to active zones leading to modulation of short-term plasticity and age-dependent anxious behavior, learning and memory. Regulates autophagic vacuoles (AVs) maturation by modulating the trafficking between endocytic and autophagolysosomal/lysosomal compartments, which involves vesicle fusion leading to regulation of degradation process. Also participates in cellular homeostasis of compounds such as, water, ions, amino acids, proteins and lipids in several tissue namely in brain and kidney through regulation of their transport and synthesis. This is Battenin from Macaca fascicularis (Crab-eating macaque).